Consider the following 178-residue polypeptide: tRNA (cytidine(56)-2'-O)-methyltransferase (178 aa).

S-adenosyl-L-methionine contacts are provided by residues Leu84, 109–113, and 127–134; these read GAEKV and IGNQPHSE.

This sequence belongs to the aTrm56 family. In terms of assembly, homodimer.

It localises to the cytoplasm. It carries out the reaction cytidine(56) in tRNA + S-adenosyl-L-methionine = 2'-O-methylcytidine(56) in tRNA + S-adenosyl-L-homocysteine + H(+). Its function is as follows. Specifically catalyzes the AdoMet-dependent 2'-O-ribose methylation of cytidine at position 56 in tRNAs. The polypeptide is tRNA (cytidine(56)-2'-O)-methyltransferase (Methanococcoides burtonii (strain DSM 6242 / NBRC 107633 / OCM 468 / ACE-M)).